Reading from the N-terminus, the 262-residue chain is Carbonic anhydrase 1 (262 aa).

Alanine 2 is subject to N-acetylalanine. An Alpha-carbonic anhydrase domain is found at leucine 4 to phenylalanine 261. Histidine 65 (proton donor/acceptor) is an active-site residue. Zn(2+)-binding residues include histidine 95, histidine 97, and histidine 120. Substrate contacts are provided by residues threonine 200 and threonine 200 to histidine 201.

This sequence belongs to the alpha-carbonic anhydrase family. It depends on Zn(2+) as a cofactor.

The protein localises to the cytoplasm. It carries out the reaction hydrogencarbonate + H(+) = CO2 + H2O. The catalysed reaction is urea = cyanamide + H2O. Inhibited by acetazolamide. Its function is as follows. Catalyzes the reversible hydration of carbon dioxide. Can hydrate cyanamide to urea. The sequence is that of Carbonic anhydrase 1 (CA1) from Monodelphis domestica (Gray short-tailed opossum).